The chain runs to 209 residues: Ribonuclease HII (209 aa).

The RNase H type-2 domain occupies 7-198 (GPVAGVDEAG…VAKAHQEWLH (192 aa)). Residues Asp13, Glu14, and Asp107 each coordinate a divalent metal cation.

It belongs to the RNase HII family. Mn(2+) serves as cofactor. It depends on Mg(2+) as a cofactor.

Its subcellular location is the cytoplasm. The catalysed reaction is Endonucleolytic cleavage to 5'-phosphomonoester.. Its function is as follows. Endonuclease that specifically degrades the RNA of RNA-DNA hybrids. This Corynebacterium glutamicum (strain ATCC 13032 / DSM 20300 / JCM 1318 / BCRC 11384 / CCUG 27702 / LMG 3730 / NBRC 12168 / NCIMB 10025 / NRRL B-2784 / 534) protein is Ribonuclease HII.